Here is a 194-residue protein sequence, read N- to C-terminus: MTRLSSGGRIEVICGCMFSGKTEELIRRLNHVRLARQRLIAFTPRRDTRYRLGSLVSHNGLSVEARVIDSIRDTPAHLNTDIHVVAVDELHLLDDPPDAAREVCQDLADRGLRVIVAGLDQDFRAQPFPAMAQLMAVAEQVDKLYAICVRCGAYATRSQRLIDGKPAPADAPTIVVGGQELYEARCRACYEPAR.

Residues Gly-15–Thr-22 and Asp-88–His-91 contribute to the ATP site. Residue Glu-89 is the Proton acceptor of the active site. Zn(2+) is bound by residues Cys-148, Cys-151, Cys-186, and Cys-189.

Belongs to the thymidine kinase family. As to quaternary structure, homotetramer.

It is found in the cytoplasm. It carries out the reaction thymidine + ATP = dTMP + ADP + H(+). The protein is Thymidine kinase of Roseiflexus castenholzii (strain DSM 13941 / HLO8).